A 32-amino-acid chain; its full sequence is Photosystem II reaction center protein T (32 aa).

Residues 3–23 traverse the membrane as a helical segment; the sequence is TLVYTFLLIGTLAVLFAAVFF.

Belongs to the PsbT family. PSII is composed of 1 copy each of membrane proteins PsbA, PsbB, PsbC, PsbD, PsbE, PsbF, PsbH, PsbI, PsbJ, PsbK, PsbL, PsbM, PsbT, PsbX, PsbY, PsbZ, Psb30/Ycf12, at least 3 peripheral proteins of the oxygen-evolving complex and a large number of cofactors. It forms dimeric complexes.

It is found in the plastid. The protein localises to the chloroplast thylakoid membrane. Functionally, found at the monomer-monomer interface of the photosystem II (PS II) dimer, plays a role in assembly and dimerization of PSII. PSII is a light-driven water plastoquinone oxidoreductase, using light energy to abstract electrons from H(2)O, generating a proton gradient subsequently used for ATP formation. The sequence is that of Photosystem II reaction center protein T from Guillardia theta (Cryptophyte).